A 288-amino-acid chain; its full sequence is ATP synthase gamma chain (288 aa).

It belongs to the ATPase gamma chain family. As to quaternary structure, F-type ATPases have 2 components, CF(1) - the catalytic core - and CF(0) - the membrane proton channel. CF(1) has five subunits: alpha(3), beta(3), gamma(1), delta(1), epsilon(1). CF(0) has three main subunits: a, b and c.

It localises to the cell inner membrane. Produces ATP from ADP in the presence of a proton gradient across the membrane. The gamma chain is believed to be important in regulating ATPase activity and the flow of protons through the CF(0) complex. This is ATP synthase gamma chain from Paracidovorax citrulli (strain AAC00-1) (Acidovorax citrulli).